A 621-amino-acid chain; its full sequence is DNA mismatch repair protein MutL (621 aa).

Belongs to the DNA mismatch repair MutL/HexB family.

Functionally, this protein is involved in the repair of mismatches in DNA. It is required for dam-dependent methyl-directed DNA mismatch repair. May act as a 'molecular matchmaker', a protein that promotes the formation of a stable complex between two or more DNA-binding proteins in an ATP-dependent manner without itself being part of a final effector complex. This is DNA mismatch repair protein MutL from Xylella fastidiosa (strain M12).